The primary structure comprises 634 residues: Zinc finger and BTB domain-containing protein 22 (634 aa).

The 65-residue stretch at 57–121 (CDVSIRVQGR…AYTGRLSMAA (65 aa)) folds into the BTB domain. Disordered stretches follow at residues 167–247 (TVPG…APVV) and 308–461 (APTP…GTSV). Low complexity predominate over residues 180-198 (TVAPATMGSARSHASSRAS). Over residues 199-209 (ENQSPSSSNYF) the composition is skewed to polar residues. The residue at position 202 (serine 202) is a Phosphoserine. Residues 217–229 (FSSSSQEAFAASA) show a composition bias toward low complexity. The segment covering 317–340 (PDLEEEEEEEDLVLTCEDDEDEEL) has biased composition (acidic residues). The span at 452–461 (GAVTVGGTSV) shows a compositional bias: low complexity. A C2H2-type 1; atypical zinc finger spans residues 486–507 (FLCHCGKAFSHKSMRDRHVNMH). 2 consecutive C2H2-type zinc fingers follow at residues 513-535 (FDCP…MKTH) and 541-562 (YECG…HRGH). A disordered region spans residues 568 to 634 (RLGGVGAVPG…MGFGGGGGAN (67 aa)). The span at 608–618 (PPSSRRVWSPP) shows a compositional bias: low complexity.

It belongs to the krueppel C2H2-type zinc-finger protein family.

It is found in the nucleus. In terms of biological role, may be involved in transcriptional regulation. This chain is Zinc finger and BTB domain-containing protein 22 (ZBTB22), found in Homo sapiens (Human).